We begin with the raw amino-acid sequence, 186 residues long: ATP synthase subunit delta, chloroplastic (186 aa).

It belongs to the ATPase delta chain family. In terms of assembly, F-type ATPases have 2 components, F(1) - the catalytic core - and F(0) - the membrane proton channel. F(1) has five subunits: alpha(3), beta(3), gamma(1), delta(1), epsilon(1). CF(0) has four main subunits: a(1), b(1), b'(1) and c(10-14). The alpha and beta chains form an alternating ring which encloses part of the gamma chain. F(1) is attached to F(0) by a central stalk formed by the gamma and epsilon chains, while a peripheral stalk is formed by the delta, b and b' chains.

Its subcellular location is the plastid. The protein localises to the chloroplast thylakoid membrane. Its function is as follows. F(1)F(0) ATP synthase produces ATP from ADP in the presence of a proton or sodium gradient. F-type ATPases consist of two structural domains, F(1) containing the extramembraneous catalytic core and F(0) containing the membrane proton channel, linked together by a central stalk and a peripheral stalk. During catalysis, ATP synthesis in the catalytic domain of F(1) is coupled via a rotary mechanism of the central stalk subunits to proton translocation. This protein is part of the stalk that links CF(0) to CF(1). It either transmits conformational changes from CF(0) to CF(1) or is implicated in proton conduction. In Porphyra purpurea (Red seaweed), this protein is ATP synthase subunit delta, chloroplastic.